Reading from the N-terminus, the 794-residue chain is Phosphoribosylformylglycinamidine synthase subunit PurL (794 aa).

Histidine 47 is an active-site residue. Positions 50 and 89 each coordinate ATP. Glutamate 91 serves as a coordination point for Mg(2+). Substrate contacts are provided by residues 92–95 (SHNH) and arginine 114. The active-site Proton acceptor is histidine 93. A Mg(2+)-binding site is contributed by aspartate 115. Glutamine 238 is a substrate binding site. Aspartate 266 lines the Mg(2+) pocket. 310–312 (ESQ) lines the substrate pocket. Positions 522 and 559 each coordinate ATP. Asparagine 560 is a Mg(2+) binding site. Serine 562 contributes to the substrate binding site.

Belongs to the FGAMS family. In terms of assembly, monomer. Part of the FGAM synthase complex composed of 1 PurL, 1 PurQ and 2 PurS subunits.

Its subcellular location is the cytoplasm. It carries out the reaction N(2)-formyl-N(1)-(5-phospho-beta-D-ribosyl)glycinamide + L-glutamine + ATP + H2O = 2-formamido-N(1)-(5-O-phospho-beta-D-ribosyl)acetamidine + L-glutamate + ADP + phosphate + H(+). Its pathway is purine metabolism; IMP biosynthesis via de novo pathway; 5-amino-1-(5-phospho-D-ribosyl)imidazole from N(2)-formyl-N(1)-(5-phospho-D-ribosyl)glycinamide: step 1/2. Functionally, part of the phosphoribosylformylglycinamidine synthase complex involved in the purines biosynthetic pathway. Catalyzes the ATP-dependent conversion of formylglycinamide ribonucleotide (FGAR) and glutamine to yield formylglycinamidine ribonucleotide (FGAM) and glutamate. The FGAM synthase complex is composed of three subunits. PurQ produces an ammonia molecule by converting glutamine to glutamate. PurL transfers the ammonia molecule to FGAR to form FGAM in an ATP-dependent manner. PurS interacts with PurQ and PurL and is thought to assist in the transfer of the ammonia molecule from PurQ to PurL. This chain is Phosphoribosylformylglycinamidine synthase subunit PurL, found in Prochlorococcus marinus (strain MIT 9303).